Consider the following 212-residue polypeptide: Ribonuclease HII (212 aa).

Residues 12 to 201 (ELVAGVDEVG…VRAMLEQVSI (190 aa)) enclose the RNase H type-2 domain. A divalent metal cation contacts are provided by D18, E19, and D110.

It belongs to the RNase HII family. Mn(2+) serves as cofactor. It depends on Mg(2+) as a cofactor.

It is found in the cytoplasm. The catalysed reaction is Endonucleolytic cleavage to 5'-phosphomonoester.. Endonuclease that specifically degrades the RNA of RNA-DNA hybrids. The sequence is that of Ribonuclease HII from Stutzerimonas stutzeri (strain A1501) (Pseudomonas stutzeri).